The following is a 197-amino-acid chain: Protein GrpE (197 aa).

Over residues 1–27 the composition is skewed to basic and acidic residues; it reads MSNKEQHIEKEEQLQEEKHEEQQKTEE. Residues 1–34 form a disordered region; it reads MSNKEQHIEKEEQLQEEKHEEQQKTEETEVEAVN.

This sequence belongs to the GrpE family. As to quaternary structure, homodimer.

It localises to the cytoplasm. In terms of biological role, participates actively in the response to hyperosmotic and heat shock by preventing the aggregation of stress-denatured proteins, in association with DnaK and GrpE. It is the nucleotide exchange factor for DnaK and may function as a thermosensor. Unfolded proteins bind initially to DnaJ; upon interaction with the DnaJ-bound protein, DnaK hydrolyzes its bound ATP, resulting in the formation of a stable complex. GrpE releases ADP from DnaK; ATP binding to DnaK triggers the release of the substrate protein, thus completing the reaction cycle. Several rounds of ATP-dependent interactions between DnaJ, DnaK and GrpE are required for fully efficient folding. The sequence is that of Protein GrpE from Pasteurella multocida (strain Pm70).